Reading from the N-terminus, the 356-residue chain is Protein RecA (356 aa).

68–75 (GQESSGKT) provides a ligand contact to ATP.

The protein belongs to the RecA family.

Its subcellular location is the cytoplasm. Functionally, can catalyze the hydrolysis of ATP in the presence of single-stranded DNA, the ATP-dependent uptake of single-stranded DNA by duplex DNA, and the ATP-dependent hybridization of homologous single-stranded DNAs. It interacts with LexA causing its activation and leading to its autocatalytic cleavage. In Thermotoga maritima (strain ATCC 43589 / DSM 3109 / JCM 10099 / NBRC 100826 / MSB8), this protein is Protein RecA.